The following is a 1024-amino-acid chain: Beta-galactosidase 2 (1024 aa).

2 residues coordinate substrate: Asn-103 and Asp-202. Asp-202 serves as a coordination point for Na(+). 3 residues coordinate Mg(2+): Glu-417, His-419, and Glu-462. Substrate is bound by residues Glu-462 and 538–541; that span reads EYAH. The active-site Proton donor is the Glu-462. Glu-538 functions as the Nucleophile in the catalytic mechanism. Mg(2+) is bound at residue Asn-598. 2 residues coordinate Na(+): Phe-602 and Asn-605. The substrate site is built by Asn-605 and Trp-1000.

The protein belongs to the glycosyl hydrolase 2 family. As to quaternary structure, homotetramer. The cofactor is Mg(2+). Na(+) serves as cofactor.

The catalysed reaction is Hydrolysis of terminal non-reducing beta-D-galactose residues in beta-D-galactosides.. The sequence is that of Beta-galactosidase 2 from Klebsiella pneumoniae subsp. pneumoniae (strain ATCC 700721 / MGH 78578).